Here is a 284-residue protein sequence, read N- to C-terminus: Bifunctional protein FolD (284 aa).

Residues 165–167 and Ser-190 each bind NADP(+); that span reads GRS.

Belongs to the tetrahydrofolate dehydrogenase/cyclohydrolase family. As to quaternary structure, homodimer.

The catalysed reaction is (6R)-5,10-methylene-5,6,7,8-tetrahydrofolate + NADP(+) = (6R)-5,10-methenyltetrahydrofolate + NADPH. It catalyses the reaction (6R)-5,10-methenyltetrahydrofolate + H2O = (6R)-10-formyltetrahydrofolate + H(+). It participates in one-carbon metabolism; tetrahydrofolate interconversion. Catalyzes the oxidation of 5,10-methylenetetrahydrofolate to 5,10-methenyltetrahydrofolate and then the hydrolysis of 5,10-methenyltetrahydrofolate to 10-formyltetrahydrofolate. This is Bifunctional protein FolD from Streptococcus equi subsp. equi (strain 4047).